We begin with the raw amino-acid sequence, 475 residues long: Ribulose bisphosphate carboxylase large chain (475 aa).

A propeptide spanning residues 1–2 (MS) is cleaved from the precursor. An N-acetylproline modification is found at Pro-3. Lys-14 bears the N6,N6,N6-trimethyllysine mark. Asn-123 and Thr-173 together coordinate substrate. Lys-175 (proton acceptor) is an active-site residue. A substrate-binding site is contributed by Lys-177. Residues Lys-201, Asp-203, and Glu-204 each coordinate Mg(2+). An N6-carboxylysine modification is found at Lys-201. Residue His-294 is the Proton acceptor of the active site. Substrate-binding residues include Arg-295, His-327, and Ser-379.

It belongs to the RuBisCO large chain family. Type I subfamily. In terms of assembly, heterohexadecamer of 8 large chains and 8 small chains. The cofactor is Mg(2+).

It localises to the plastid. Its subcellular location is the chloroplast. It carries out the reaction 2 (2R)-3-phosphoglycerate + 2 H(+) = D-ribulose 1,5-bisphosphate + CO2 + H2O. The catalysed reaction is D-ribulose 1,5-bisphosphate + O2 = 2-phosphoglycolate + (2R)-3-phosphoglycerate + 2 H(+). Functionally, ruBisCO catalyzes two reactions: the carboxylation of D-ribulose 1,5-bisphosphate, the primary event in carbon dioxide fixation, as well as the oxidative fragmentation of the pentose substrate in the photorespiration process. Both reactions occur simultaneously and in competition at the same active site. The sequence is that of Ribulose bisphosphate carboxylase large chain from Nymphaea alba (White water-lily).